The primary structure comprises 305 residues: Thioredoxin reductase (305 aa).

L28–Q35 is a binding site for FAD. C129 and C132 are joined by a disulfide. Residue D272–A281 coordinates FAD.

It belongs to the class-II pyridine nucleotide-disulfide oxidoreductase family. In terms of assembly, homodimer. Requires FAD as cofactor.

Its subcellular location is the cytoplasm. The enzyme catalyses [thioredoxin]-dithiol + NADP(+) = [thioredoxin]-disulfide + NADPH + H(+). This Spironucleus barkhanus protein is Thioredoxin reductase (TRXB).